The sequence spans 564 residues: O-fucosyltransferase 6 (564 aa).

A helical; Signal-anchor for type II membrane protein membrane pass occupies residues 17–37; sequence LLPFICAVSGALLILFALLSI. Asn-95 and Asn-139 each carry an N-linked (GlcNAc...) asparagine glycan. 277–279 contacts substrate; the sequence is HLR. An N-linked (GlcNAc...) asparagine glycan is attached at Asn-449. Basic and acidic residues predominate over residues 501–512; that stretch reads MDSRKFGKKEQK. Positions 501–542 are disordered; it reads MDSRKFGKKEQKEDEDAELSSSETDYEEDQTDLQDRGLYNGT. Acidic residues predominate over residues 513 to 532; that stretch reads EDEDAELSSSETDYEEDQTD. N-linked (GlcNAc...) asparagine glycosylation occurs at Asn-540.

This sequence belongs to the glycosyltransferase GT106 family.

It localises to the membrane. It participates in glycan metabolism. This is O-fucosyltransferase 6 from Arabidopsis thaliana (Mouse-ear cress).